A 459-amino-acid chain; its full sequence is UDP-glycosyltransferase 79B30 (459 aa).

His18 (proton acceptor) is an active-site residue. His18 contributes to the an anthocyanidin binding site. Asp115 functions as the Charge relay in the catalytic mechanism. UDP-alpha-D-glucose is bound by residues Thr136, Val333, Gln335, His350, Ser355, and Glu358. An anthocyanidin is bound at residue Gly373. The UDP-alpha-D-glucose site is built by Asp374 and Gln375.

The protein belongs to the UDP-glycosyltransferase family. Expressed in leaves.

It catalyses the reaction a flavonol 3-O-beta-D-glucoside + UDP-alpha-D-glucose = a flavonol 3-O-beta-D-glucosyl-(1-&gt;2)-beta-D-glucoside + UDP + H(+). In terms of biological role, flavonol 3-O-glucoside/galactoside (1-&gt;2) glucosyltransferase converting kaempferol 3-O-glucoside to kaempferol 3-O-sophoroside. Has a broad in vitro activity for kaempferol/ quercetin 3-O-glucoside/galactoside derivatives, but cannot glucosylate kaempferol 3-O-rhamnosyl-(1-&gt;4)-[rhamnosyl-(1-&gt;6)- glucoside] and 3-O-rhamnosyl-(1-&gt;4)-[glucosyl-(1-&gt;6)-glucoside]. Has a higher preference for UDP-glucose than UDP-galactose, and no activity with UDP-arabinose and UDP-glucuronic acid. Represents probably a recessive allele of the gene. The sequence is that of UDP-glycosyltransferase 79B30 from Glycine max (Soybean).